Reading from the N-terminus, the 172-residue chain is Putative phosphoesterase BAMEG_3349 (172 aa).

The active-site Proton donor is histidine 34. 2 short sequence motifs (HXTX) span residues 34-37 (HITL) and 115-118 (HLTI). The active-site Proton acceptor is the histidine 115.

This sequence belongs to the 2H phosphoesterase superfamily. YjcG family.

The sequence is that of Putative phosphoesterase BAMEG_3349 from Bacillus anthracis (strain CDC 684 / NRRL 3495).